We begin with the raw amino-acid sequence, 145 residues long: Large ribosomal subunit protein uL13 (145 aa).

It belongs to the universal ribosomal protein uL13 family. As to quaternary structure, part of the 50S ribosomal subunit.

This protein is one of the early assembly proteins of the 50S ribosomal subunit, although it is not seen to bind rRNA by itself. It is important during the early stages of 50S assembly. This is Large ribosomal subunit protein uL13 from Geobacillus sp. (strain WCH70).